Here is a 341-residue protein sequence, read N- to C-terminus: Ribosomal RNA small subunit methyltransferase C (341 aa).

Belongs to the methyltransferase superfamily. RsmC family. In terms of assembly, monomer.

It is found in the cytoplasm. The catalysed reaction is guanosine(1207) in 16S rRNA + S-adenosyl-L-methionine = N(2)-methylguanosine(1207) in 16S rRNA + S-adenosyl-L-homocysteine + H(+). Specifically methylates the guanine in position 1207 of 16S rRNA in the 30S particle. In Vibrio parahaemolyticus serotype O3:K6 (strain RIMD 2210633), this protein is Ribosomal RNA small subunit methyltransferase C.